The chain runs to 217 residues: Ras-related protein RGP2 (217 aa).

Residues 19 to 26 (GDSGVGKS), 67 to 71 (DTAGQ), and 125 to 128 (NKSD) contribute to the GTP site. S-geranylgeranyl cysteine attachment occurs at residues Cys214 and Cys215.

Belongs to the small GTPase superfamily. Rab family.

It localises to the cell membrane. The polypeptide is Ras-related protein RGP2 (RGP2) (Oryza sativa subsp. japonica (Rice)).